The following is a 107-amino-acid chain: uncharacterized protein (107 aa).

The segment covering 1–14 (MTERNASGRMNTKG) has biased composition (polar residues). Residues 1-20 (MTERNASGRMNTKGRSIKET) are disordered.

The protein resides in the mitochondrion. This is an uncharacterized protein from Arabidopsis thaliana (Mouse-ear cress).